The sequence spans 1549 residues: Ferredoxin-dependent glutamate synthase (1549 aa).

The active-site For GATase activity is the cysteine 37. The region spanning 37-435 (CGVGFIAHLD…PGEMIVLDLQ (399 aa)) is the Glutamine amidotransferase type-2 domain. 1116-1173 (LHEVHCLLVENNLREKVILRVDGGLRTGQDVVMAALLGADEYGFGTIAMIAGGCIMAR) lines the FMN pocket. 3 residues coordinate [3Fe-4S] cluster: cysteine 1169, cysteine 1175, and cysteine 1180.

Belongs to the glutamate synthase family. In terms of assembly, monomer. It depends on [3Fe-4S] cluster as a cofactor. FAD serves as cofactor. The cofactor is FMN.

Its subcellular location is the plastid. The protein localises to the chloroplast stroma. It catalyses the reaction 2 oxidized [2Fe-2S]-[ferredoxin] + 2 L-glutamate = L-glutamine + 2 reduced [2Fe-2S]-[ferredoxin] + 2-oxoglutarate + 2 H(+). The protein operates within amino-acid biosynthesis; L-glutamate biosynthesis via GLT pathway; L-glutamate from 2-oxoglutarate and L-glutamine (ferredoxin route): step 1/1. It functions in the pathway energy metabolism; nitrogen metabolism. The polypeptide is Ferredoxin-dependent glutamate synthase (gltB) (Cyanidium caldarium (Red alga)).